A 190-amino-acid chain; its full sequence is MELILGSQSSARANLLKEHGIKFEQKALYFDEESLKTTDPREFVYLACKGKLEKAKELLANNCVIVVADSVVSVDNRMQRKAQSKREALEFLKRQNGNEIEVLTCSALISPKLEWLDLSVFRARLKAFDPSEIEKYLESGLWQESAGCVRLEDFHRPYIKSSSKNLSVGLGLNVEGLLGALKLGAKIASL.

Catalysis depends on aspartate 69, which acts as the Proton acceptor.

This sequence belongs to the Maf family. The cofactor is a divalent metal cation.

The protein resides in the cytoplasm. The catalysed reaction is a ribonucleoside 5'-triphosphate + H2O = a ribonucleoside 5'-phosphate + diphosphate + H(+). The enzyme catalyses a 2'-deoxyribonucleoside 5'-triphosphate + H2O = a 2'-deoxyribonucleoside 5'-phosphate + diphosphate + H(+). Functionally, nucleoside triphosphate pyrophosphatase. May have a dual role in cell division arrest and in preventing the incorporation of modified nucleotides into cellular nucleic acids. The protein is Nucleoside triphosphate pyrophosphatase of Helicobacter pylori (strain P12).